We begin with the raw amino-acid sequence, 163 residues long: Nucleotide-binding protein CJE0423 (163 aa).

This sequence belongs to the YajQ family.

Its function is as follows. Nucleotide-binding protein. This is Nucleotide-binding protein CJE0423 from Campylobacter jejuni (strain RM1221).